A 408-amino-acid chain; its full sequence is FAD-dependent monooxygenase nscC (408 aa).

The first 20 residues, 1–20 (MASRLPILIIGAGISGLTTA), serve as a signal peptide directing secretion. FAD-binding residues include E34 and A45. Residues N91 and N103 are each glycosylated (N-linked (GlcNAc...) asparagine). Residue R119 coordinates FAD. 2 N-linked (GlcNAc...) asparagine glycosylation sites follow: N170 and N231. FAD is bound by residues D328 and G341.

It belongs to the paxM FAD-dependent monooxygenase family. FAD serves as cofactor.

Its pathway is secondary metabolite biosynthesis. In terms of biological role, FAD-dependent monooxygenase; part of the gene cluster that mediates the biosynthesis of neosartoricin, a prenylated anthracenone that exhibits T-cell antiproliferative activity, suggestive of a physiological role as an immunosuppressive agent. The non-reducing polyketide synthase nscA probably synthesizes and cyclizes the decaketide backbone. The hydrolase nscB then mediates the product release through hydrolysis followed by spontaneous decarboxylation. The prenyltransferase nscD catalyzes the addition of the dimethylallyl group to the aromatic C5. The FAD-dependent monooxygenase nscC is then responsible for the stereospecific hydroxylation at C2. There is no gene encoding O-acetyltransferase in the nsc gene cluster; thus, the last step of 2-O-acetylation leading to neosartoricin may be catalyzed by an unidentified O-acetyltransferase. The protein is FAD-dependent monooxygenase nscC of Aspergillus fumigatus (strain ATCC MYA-4609 / CBS 101355 / FGSC A1100 / Af293) (Neosartorya fumigata).